The following is a 387-amino-acid chain: Methionine aminopeptidase 1 (387 aa).

Serine 2 is subject to N-acetylserine. Residues 2–10 (STATTTVTT) constitute a propeptide that is removed on maturation. Residues 19–73 (KIYCSGLQCGRETSSQMKCPVCLKQGIVSIFCDTSCYENNYKAHKALHNAKDGLE) form a C6H2-type zinc finger. Positions 22, 27, 37, 40, 50, 54, 62, and 66 each coordinate Zn(2+). Histidine 202 serves as a coordination point for a protein. Zn(2+) is bound by residues aspartate 219, aspartate 230, and histidine 294. Position 301 (histidine 301) interacts with a protein. 2 residues coordinate Zn(2+): glutamate 327 and glutamate 358.

The protein belongs to the peptidase M24A family. Methionine aminopeptidase type 1 subfamily. In terms of assembly, associates with the 60S ribosomal subunit of the 80S translational complex. The cofactor is Zn(2+). It depends on Co(2+) as a cofactor. Mn(2+) serves as cofactor. Fe(2+) is required as a cofactor.

It localises to the cytoplasm. It carries out the reaction Release of N-terminal amino acids, preferentially methionine, from peptides and arylamides.. In contract to the MetAP 2 isoform, is not inhibited by the fungal metabolite fumagillin, an antiangiogenic drug. Functionally, cotranslationally removes the N-terminal methionine from nascent proteins. The N-terminal methionine is often cleaved when the second residue in the primary sequence is small and uncharged (Met-Ala-, Cys, Gly, Pro, Ser, Thr, or Val). Plays the major role in N-terminal methionine removal. Less efficient when the second residue is Val. In Saccharomyces cerevisiae (strain ATCC 204508 / S288c) (Baker's yeast), this protein is Methionine aminopeptidase 1 (MAP1).